The sequence spans 283 residues: Protein/nucleic acid deglycase HchA (283 aa).

Zn(2+) is bound by residues His-86, Glu-91, and His-123. Cys-185 functions as the Nucleophile in the catalytic mechanism.

It belongs to the peptidase C56 family. HchA subfamily. Homodimer.

The protein localises to the cytoplasm. The catalysed reaction is N(omega)-(1-hydroxy-2-oxopropyl)-L-arginyl-[protein] + H2O = lactate + L-arginyl-[protein] + H(+). The enzyme catalyses N(6)-(1-hydroxy-2-oxopropyl)-L-lysyl-[protein] + H2O = lactate + L-lysyl-[protein] + H(+). It catalyses the reaction S-(1-hydroxy-2-oxopropyl)-L-cysteinyl-[protein] + H2O = lactate + L-cysteinyl-[protein] + H(+). It carries out the reaction N(omega)-(1-hydroxy-2-oxoethyl)-L-arginyl-[protein] + H2O = L-arginyl-[protein] + glycolate + H(+). The catalysed reaction is N(6)-(1-hydroxy-2-oxoethyl)-L-lysyl-[protein] + H2O = glycolate + L-lysyl-[protein] + H(+). The enzyme catalyses S-(1-hydroxy-2-oxoethyl)-L-cysteinyl-[protein] + H2O = glycolate + L-cysteinyl-[protein] + H(+). It catalyses the reaction N(2)-(1-hydroxy-2-oxopropyl)-dGTP + H2O = lactate + dGTP + H(+). It carries out the reaction N(2)-(1-hydroxy-2-oxopropyl)-GTP + H2O = lactate + GTP + H(+). The catalysed reaction is N(2)-(1-hydroxy-2-oxopropyl)-GDP + H2O = lactate + GDP + H(+). The enzyme catalyses N(2)-(1-hydroxy-2-oxopropyl)-GMP + H2O = lactate + GMP + H(+). It catalyses the reaction N(2)-(1-hydroxy-2-oxoethyl)-dGTP + H2O = dGTP + glycolate + H(+). It carries out the reaction N(2)-(1-hydroxy-2-oxoethyl)-GTP + H2O = glycolate + GTP + H(+). The catalysed reaction is N(2)-(1-hydroxy-2-oxoethyl)-GDP + H2O = glycolate + GDP + H(+). The enzyme catalyses N(2)-(1-hydroxy-2-oxoethyl)-GMP + H2O = glycolate + GMP + H(+). It catalyses the reaction an N(2)-(1-hydroxy-2-oxopropyl)-guanosine in RNA + H2O = a guanosine in RNA + lactate + H(+). It carries out the reaction an N(2)-(1-hydroxy-2-oxopropyl)-2'-deoxyguanosine in DNA + H2O = a 2'-deoxyguanosine in DNA + lactate + H(+). The catalysed reaction is an N(2)-(1-hydroxy-2-oxoethyl)-guanosine in RNA + H2O = a guanosine in RNA + glycolate + H(+). The enzyme catalyses an N(2)-(1-hydroxy-2-oxoethyl)-2'-deoxyguanosine in DNA + H2O = a 2'-deoxyguanosine in DNA + glycolate + H(+). Its function is as follows. Protein and nucleotide deglycase that catalyzes the deglycation of the Maillard adducts formed between amino groups of proteins or nucleotides and reactive carbonyl groups of glyoxals. Thus, functions as a protein deglycase that repairs methylglyoxal- and glyoxal-glycated proteins, and releases repaired proteins and lactate or glycolate, respectively. Deglycates cysteine, arginine and lysine residues in proteins, and thus reactivates these proteins by reversing glycation by glyoxals. Acts on early glycation intermediates (hemithioacetals and aminocarbinols), preventing the formation of Schiff bases and advanced glycation endproducts (AGE). Also functions as a nucleotide deglycase able to repair glycated guanine in the free nucleotide pool (GTP, GDP, GMP, dGTP) and in DNA and RNA. Is thus involved in a major nucleotide repair system named guanine glycation repair (GG repair), dedicated to reversing methylglyoxal and glyoxal damage via nucleotide sanitization and direct nucleic acid repair. Plays an important role in protecting cells from carbonyl stress. The polypeptide is Protein/nucleic acid deglycase HchA (Escherichia coli O7:K1 (strain IAI39 / ExPEC)).